The following is a 198-amino-acid chain: Angiopoietin-like protein 8 (198 aa).

A signal peptide spans 1-21 (MPVPALCLLWALAMVTRPASA).

Belongs to the ANGPTL8 family. As to quaternary structure, interacts with ANGPTL3. Post-translationally, proteolytically cleaved at the N-terminus. As to expression, predominantly expressed in liver. Also expressed in adipose tissues.

Its subcellular location is the secreted. Its function is as follows. Hormone that acts as a blood lipid regulator by regulating serum triglyceride levels. May be involved in the metabolic transition between fasting and refeeding: required to direct fatty acids to adipose tissue for storage in the fed state. This chain is Angiopoietin-like protein 8, found in Homo sapiens (Human).